We begin with the raw amino-acid sequence, 330 residues long: Pseudouridine-5'-phosphate glycosidase (330 aa).

Glu50 serves as the catalytic Proton donor. The substrate site is built by Lys112 and Val132. Asp164 contributes to the Mn(2+) binding site. 166-168 (SSD) is a substrate binding site. Lys185 serves as the catalytic Nucleophile.

This sequence belongs to the pseudouridine-5'-phosphate glycosidase family. In terms of assembly, homotrimer. Requires Mn(2+) as cofactor.

The protein localises to the peroxisome. The enzyme catalyses D-ribose 5-phosphate + uracil = psi-UMP + H2O. Its function is as follows. Catalyzes the reversible cleavage of pseudouridine 5'-phosphate (PsiMP) to ribose 5-phosphate and uracil. Functions biologically in the cleavage direction, as part of a pseudouridine degradation pathway. Acts together with the pseudouridine kinase PUKI in the peroxisome to prevent toxic pseudouridine monophosphate accumulation. Can catalyze the formation of pseudouridine 5'-phosphate (reverse reaction) in vitro, with a catalytic efficiency 4 times lower than the hydrolysis reaction. The chain is Pseudouridine-5'-phosphate glycosidase from Arabidopsis thaliana (Mouse-ear cress).